The chain runs to 433 residues: 3-phosphoshikimate 1-carboxyvinyltransferase (433 aa).

Residues Lys-21, Ser-22, and Arg-26 each contribute to the 3-phosphoshikimate site. Lys-21 is a binding site for phosphoenolpyruvate. Phosphoenolpyruvate-binding residues include Gly-96 and Arg-124. Residues Ser-167, Ser-168, Gln-169, Ser-195, Asp-310, and Lys-337 each coordinate 3-phosphoshikimate. Position 169 (Gln-169) interacts with phosphoenolpyruvate. The active-site Proton acceptor is the Asp-310. Arg-341, Arg-384, and Lys-410 together coordinate phosphoenolpyruvate.

Belongs to the EPSP synthase family. As to quaternary structure, monomer.

It is found in the cytoplasm. The catalysed reaction is 3-phosphoshikimate + phosphoenolpyruvate = 5-O-(1-carboxyvinyl)-3-phosphoshikimate + phosphate. Its pathway is metabolic intermediate biosynthesis; chorismate biosynthesis; chorismate from D-erythrose 4-phosphate and phosphoenolpyruvate: step 6/7. Catalyzes the transfer of the enolpyruvyl moiety of phosphoenolpyruvate (PEP) to the 5-hydroxyl of shikimate-3-phosphate (S3P) to produce enolpyruvyl shikimate-3-phosphate and inorganic phosphate. The protein is 3-phosphoshikimate 1-carboxyvinyltransferase of Clostridium botulinum (strain Alaska E43 / Type E3).